Consider the following 308-residue polypeptide: MANTVILVDQPTLEKMKQTYLPFSNPKLPPGAVFAAKKPGVSITGYKSRKVMFQGVNGEAEAKKWVATLPESKAKAPSVSKGILPANFASKNVIGSDEVGTGDFFGPITVCAAYVDAEMMPLLKELGVKDSKAMKDPEICRIAEKIMPLVPHSVLLCPNPKYNELQKRGMNQGQMKALLHNRAIENVLKKLAPIKPEAILIDQFAEKNTYYRYLAKEPSIIREDVFFATKAEGLHLSVAAASIIARYKFVQAFDAMSKEVGIPLPKGAGPHVDAVAAEIIERFGLETLAKYTKQHFANTEKALKMVKK.

The RNase H type-2 domain maps to 91-308 (KNVIGSDEVG…TEKALKMVKK (218 aa)). Residues D97, E98, and D202 each contribute to the a divalent metal cation site.

This sequence belongs to the RNase HII family. RnhC subfamily. The cofactor is Mn(2+). Requires Mg(2+) as cofactor.

It is found in the cytoplasm. The enzyme catalyses Endonucleolytic cleavage to 5'-phosphomonoester.. Endonuclease that specifically degrades the RNA of RNA-DNA hybrids. This is Ribonuclease HIII from Listeria monocytogenes serovar 1/2a (strain ATCC BAA-679 / EGD-e).